A 1126-amino-acid chain; its full sequence is Ubiquitin carboxyl-terminal hydrolase 16/45 (1126 aa).

Residues 1 to 15 (MVKKRQADSRDHDCS) show a composition bias toward basic and acidic residues. The interval 1–44 (MVKKRQADSRDHDCSTDSGNEDLHHRKGLGSPGQSDGATPTTAS) is disordered. Residues 32–44 (PGQSDGATPTTAS) are compositionally biased toward polar residues. A UBP-type zinc finger spans residues 43–181 (ASCQHIKKAV…ELVKKLAQKP (139 aa)). Residues Cys45, His47, Cys70, Cys73, Cys111, Cys114, Cys119, His126, His130, His139, Cys152, and Cys155 each coordinate Zn(2+). Low complexity-rich tracts occupy residues 215-229 (GGSF…SLAA) and 254-264 (SSGLSTSDSLT). A disordered region spans residues 215–264 (GGSFDDSSSRGSLAAAGGGGGVGSSRNRQVAIPMPPPEPSSGLSTSDSLT). Cys315 serves as the catalytic Nucleophile. Disordered regions lie at residues 513 to 547 (KPQP…INTK), 570 to 762 (ASLG…SGSS), and 795 to 833 (EQGA…ARTK). Residues 524–539 (PELSLTSSSSSVTPST) show a composition bias toward low complexity. The segment covering 586–598 (QRKAKRAAKKRQK) has biased composition (basic residues). Composition is skewed to low complexity over residues 599-614 (SSLN…GNEL) and 646-657 (TEDSTTSSVTTS). Over residues 674 to 701 (APSTNNVPSSTASLTAPSKTYMDSNGNA) the composition is skewed to polar residues. Basic and acidic residues predominate over residues 705–718 (GEKRDDTPEHMDKD). Over residues 730–762 (ATSPAPTATNSSTSTSATGNNNSVAGSGLSGSS) the composition is skewed to low complexity. The span at 807–816 (GEAKAIEQPE) shows a compositional bias: basic and acidic residues. Residues 821 to 830 (QAQAMAQAQA) show a composition bias toward low complexity. His984 serves as the catalytic Proton acceptor. A disordered region spans residues 1037 to 1089 (LKVLDDSDDFSNSSSNSSTSDESQTPATPLEEQQTQQAQQPQQPQQLEEAANV). Low complexity predominate over residues 1046–1086 (FSNSSSNSSTSDESQTPATPLEEQQTQQAQQPQQPQQLEEA).

It belongs to the peptidase C19 family.

It carries out the reaction Thiol-dependent hydrolysis of ester, thioester, amide, peptide and isopeptide bonds formed by the C-terminal Gly of ubiquitin (a 76-residue protein attached to proteins as an intracellular targeting signal).. Involved in the regulation of DNA damage repair. The protein is Ubiquitin carboxyl-terminal hydrolase 16/45 of Drosophila melanogaster (Fruit fly).